A 173-amino-acid chain; its full sequence is NADH-ubiquinone oxidoreductase chain 6 (173 aa).

A run of 5 helical transmembrane segments spans residues 1-21, 27-47, 48-68, 87-107, and 139-159; these read MTYFVLFLGLCFVLGGLAVAS, YGVVGLVLASVAGCGWLLSLG, VSFVSLVLFMVYLGGMLVVFV, VVGYGVGFVVVLVVGLVVGGF, and CGVGMFLVAGWGLLLTLFVVL.

It belongs to the complex I subunit 6 family.

It is found in the mitochondrion membrane. It catalyses the reaction a ubiquinone + NADH + 5 H(+)(in) = a ubiquinol + NAD(+) + 4 H(+)(out). Functionally, core subunit of the mitochondrial membrane respiratory chain NADH dehydrogenase (Complex I) that is believed to belong to the minimal assembly required for catalysis. Complex I functions in the transfer of electrons from NADH to the respiratory chain. The immediate electron acceptor for the enzyme is believed to be ubiquinone. This Ptychoramphus aleuticus (Cassin's auklet) protein is NADH-ubiquinone oxidoreductase chain 6 (MT-ND6).